The following is a 491-amino-acid chain: Glutamate--tRNA ligase (491 aa).

The 'HIGH' region motif lies at 13–23 (PSPTGFLHIGN). Residues Cys110, Cys112, Cys137, and His139 each coordinate Zn(2+). Residues 254 to 258 (KLSKR) carry the 'KMSKS' region motif. Lys257 provides a ligand contact to ATP.

It belongs to the class-I aminoacyl-tRNA synthetase family. Glutamate--tRNA ligase type 1 subfamily. In terms of assembly, monomer. Zn(2+) serves as cofactor.

The protein localises to the cytoplasm. The enzyme catalyses tRNA(Glu) + L-glutamate + ATP = L-glutamyl-tRNA(Glu) + AMP + diphosphate. In terms of biological role, catalyzes the attachment of glutamate to tRNA(Glu) in a two-step reaction: glutamate is first activated by ATP to form Glu-AMP and then transferred to the acceptor end of tRNA(Glu). The protein is Glutamate--tRNA ligase of Listeria monocytogenes serotype 4b (strain F2365).